Reading from the N-terminus, the 825-residue chain is Ent-copalyl diphosphate synthase 2, chloroplastic (825 aa).

The N-terminal 70 residues, 1 to 70, are a transit peptide targeting the chloroplast; it reads MVLSSSCTTV…KGSSLTPIVR (70 aa). Lys-241 provides a ligand contact to substrate. A DXDD motif motif is present at residues 373 to 376; that stretch reads EVDD. Residue Lys-459 coordinates substrate.

The protein belongs to the terpene synthase family. Tpsc subfamily. Mg(2+) is required as a cofactor. In terms of tissue distribution, expressed in tassels.

It localises to the plastid. It is found in the chloroplast. It catalyses the reaction (2E,6E,10E)-geranylgeranyl diphosphate = ent-copalyl diphosphate. It functions in the pathway plant hormone biosynthesis; gibberellin biosynthesis. In terms of biological role, involved in gibberellin biosynthesis. Catalyzes the conversion of geranylgeranyl diphosphate to the gibberellin precursor ent-copalyl diphosphate (ent-CPP). Involved in the production of antifungal dolabralexin phytoalexins in response to biotic and abiotic stresses. In response to fungal infection and in associtation with KSL4, is involved in the production dolabradiene, a type of antifungal phytoalexin. This is Ent-copalyl diphosphate synthase 2, chloroplastic from Zea mays (Maize).